The primary structure comprises 472 residues: 4-aminobutyrate aminotransferase (472 aa).

Position 135–136 (135–136 (GA)) interacts with pyridoxal 5'-phosphate. Residue arginine 193 participates in substrate binding. Lysine 327 carries the post-translational modification N6-(pyridoxal phosphate)lysine. Threonine 352 contributes to the pyridoxal 5'-phosphate binding site.

Belongs to the class-III pyridoxal-phosphate-dependent aminotransferase family. As to quaternary structure, homodimer and homotetramer. Pyridoxal 5'-phosphate serves as cofactor.

It is found in the cytoplasm. The catalysed reaction is 4-aminobutanoate + 2-oxoglutarate = succinate semialdehyde + L-glutamate. The protein operates within amino-acid degradation; L-arginine degradation. In terms of biological role, required for the degradation of gamma-aminobutyric acid (GABA), which is important for utilization of GABA as nitrogen source and for oxidative stress tolerance. Deaminates GABA to succinate semialdehyde, which in turn is converted to succinate by the succinate-semialdehyde dehydrogenase UGA2. May be involved in an alternative, arginase-independent arginine degradation pathway via GABA. This chain is 4-aminobutyrate aminotransferase, found in Kluyveromyces lactis (strain ATCC 8585 / CBS 2359 / DSM 70799 / NBRC 1267 / NRRL Y-1140 / WM37) (Yeast).